We begin with the raw amino-acid sequence, 383 residues long: Peroxisomal membrane protein PEX15 (383 aa).

Over 1-331 (MAASEIMNNL…AVLKHHFTRS (331 aa)) the chain is Cytoplasmic. The helical transmembrane segment at 332–349 (VLNKNGLLLTGLLLLLCL) threads the bilayer. Residues 350–383 (KKYKSLMAIFKHVPAAFHTVYPQIVGLLKLLASI) lie on the Lumenal side of the membrane.

As to quaternary structure, interacts with PEX6. Interacts with PEX19; targets PEX15 to the peroxisome. Post-translationally, phosphorylated.

It localises to the peroxisome membrane. It is found in the endoplasmic reticulum membrane. Peroxisomal docking factor that anchors PEX1 and PEX6 to peroxisome membranes. PEX26 is therefore required for the formation of the PEX1-PEX6 AAA ATPase complex, a complex that mediates the extraction of the PEX5 receptor from peroxisomal membrane. The sequence is that of Peroxisomal membrane protein PEX15 (PEX15) from Saccharomyces cerevisiae (strain ATCC 204508 / S288c) (Baker's yeast).